The sequence spans 242 residues: MTTVSMRDMLQAGVHFGHQTRYWNPKMKPFIFGARNGVHIINLEHTVPMFNEALAFISNVASKKGKVLFVGTKRAASEAIKEAAISCDQYYVDNRWLGGMLTNWKTVRQSIKRLKDLESQSVDGTFDKLTKKEALMRTRELEKLEKSLGGIKNMGGLPDVIFVIGADHEHIAIKEANNLGIPVVAVVDTNSSPDGINYIVPGNDDAMRAIRLYAESVAAAAKAGRGQDLAVQAEQDGFVEAE.

It belongs to the universal ribosomal protein uS2 family.

The chain is Small ribosomal subunit protein uS2 from Shewanella loihica (strain ATCC BAA-1088 / PV-4).